We begin with the raw amino-acid sequence, 243 residues long: Nuclear ubiquitous casein and cyclin-dependent kinase substrate 1 (243 aa).

The interval 1-243 (MSRPVRNRKV…SEDDAQSGED (243 aa)) is disordered. Phosphotyrosine is present on tyrosine 13. Phosphoserine is present on residues serine 14 and serine 19. Tyrosine 26 carries the phosphotyrosine modification. Residues 35–51 (KKIRSSPREAKNKRRSG) show a composition bias toward basic residues. Residues serine 54, serine 58, serine 61, serine 73, serine 75, and serine 79 each carry the phosphoserine modification. Basic and acidic residues predominate over residues 64 to 77 (KDVKTKKDDSHSAE). Positions 91 to 100 (QQRQAASKAA) are enriched in low complexity. Residues 111-124 (VGSEEEQEEEDEAP) show a composition bias toward acidic residues. Phosphoserine is present on residues serine 113, serine 130, serine 132, and serine 144. Residues 132–145 (SDEDFLVEDDDDSD) show a composition bias toward acidic residues. Residues 149 to 174 (SKKKNKKMVKKSKPERKEKKMPKPRL) are compositionally biased toward basic residues. Threonine 179 is subject to Phosphothreonine. The residue at position 181 (serine 181) is a Phosphoserine. Residues 197–206 (ASKEKTPSPK) show a composition bias toward basic and acidic residues. Threonine 202 bears the Phosphothreonine mark. Serine 204, serine 214, serine 223, serine 229, serine 234, and serine 240 each carry phosphoserine. Positions 232 to 243 (EGSEDDAQSGED) are enriched in acidic residues.

As to quaternary structure, does not interact with RAD51. In terms of processing, phosphorylated in an ATM-dependent manner in response to DNA damage. Phosphorylated by CDK1 and casein kinase.

The protein localises to the nucleus. It is found in the chromosome. Functionally, chromatin-associated protein involved in DNA repair by promoting homologous recombination (HR). Binds double-stranded DNA (dsDNA) and secondary DNA structures, such as D-loop structures, but with less affinity than RAD51AP1. The sequence is that of Nuclear ubiquitous casein and cyclin-dependent kinase substrate 1 (NUCKS1) from Bos taurus (Bovine).